The sequence spans 218 residues: Adenylate kinase (218 aa).

10-15 (GAGKGT) provides a ligand contact to ATP. The interval 30 to 59 (STGDMLRAAVKAGTPLGIEAKKVMDSGGLV) is NMP. AMP-binding positions include Thr-31, Arg-36, 57–59 (GLV), 85–88 (GFPR), and Gln-92. The tract at residues 122–159 (GRRSHSASGRTYHVKYNPPKVEGLDDVTGEPLIQREDD) is LID. ATP is bound by residues Arg-123 and 132–133 (TY). AMP-binding residues include Arg-156 and Arg-167. Gly-203 contacts ATP.

The protein belongs to the adenylate kinase family. In terms of assembly, monomer.

It is found in the cytoplasm. It catalyses the reaction AMP + ATP = 2 ADP. It functions in the pathway purine metabolism; AMP biosynthesis via salvage pathway; AMP from ADP: step 1/1. In terms of biological role, catalyzes the reversible transfer of the terminal phosphate group between ATP and AMP. Plays an important role in cellular energy homeostasis and in adenine nucleotide metabolism. The sequence is that of Adenylate kinase from Polaromonas naphthalenivorans (strain CJ2).